The chain runs to 358 residues: DnaJ homolog subfamily B member 11 (358 aa).

An N-terminal signal peptide occupies residues 1 to 22 (MAPQNLSTFCLLLLYLIGAVIA). The J domain occupies 25–90 (DFYKILGVPR…EKRKQYDTYG (66 aa)). Thr188 carries the phosphothreonine modification. N-linked (GlcNAc...) asparagine glycosylation occurs at Asn261.

Part of a large chaperone multiprotein complex comprising DNAJB11, HSP90B1, HSPA5, HYOU, PDIA2, PDIA4, PDIA6, PPIB, SDF2L1, UGGT1 and very small amounts of ERP29, but not, or at very low levels, CALR nor CANX. Binds to denatured substrates in an ATP-independent manner. Interacts via the J domain with HSPA5 in an ATP-dependent manner. Post-translationally, contains high-mannose Endo H-sensitive carbohydrates. Cys-169, Cys-171, Cys-193 and Cys-196 form intramolecular disulfide bonds. The preferential partner for each Cys is not known. In terms of processing, thr-188 was reported to be phosphorylated upon DNA damage by ATM or ATR; however as this position has been shown to be in the ER lumen, the in vivo relevance is not proven. Widely expressed.

The protein localises to the endoplasmic reticulum lumen. Functionally, as a co-chaperone for HSPA5 it is required for proper folding, trafficking or degradation of proteins. Binds directly to both unfolded proteins that are substrates for ERAD and nascent unfolded peptide chains, but dissociates from the HSPA5-unfolded protein complex before folding is completed. May help recruiting HSPA5 and other chaperones to the substrate. Stimulates HSPA5 ATPase activity. It is necessary for maturation and correct trafficking of PKD1. The chain is DnaJ homolog subfamily B member 11 (DNAJB11) from Homo sapiens (Human).